The following is a 302-amino-acid chain: Merozoite surface protein 2 (302 aa).

The N-terminal stretch at 1-20 (MKVIKTLSIINFFIFVTFNI) is a signal peptide. N-linked (GlcNAc...) asparagine glycosylation is found at N22 and N36. Positions 44-228 (EESKPPTGAV…EQTESPELQS (185 aa)) are polymorphic region. A 1; partial repeat occupies 55-60 (GSGAGA). The segment at 55–113 (GSGAGAGSGAGAVAGSGAGAVAGSGAGAVAGSGAGAVAGSGAGAVAGSGAGAVAGSGAG) is 8 X 8 AA tandem repeats of G-S-G-A-G-A-V-A. A run of 6 repeats spans residues 61 to 68 (GSGAGAVA), 69 to 76 (GSGAGAVA), 77 to 84 (GSGAGAVA), 85 to 92 (GSGAGAVA), 93 to 100 (GSGAGAVA), and 101 to 108 (GSGAGAVA). Residues 109–113 (GSGAG) form an 8; partial repeat. A disordered region spans residues 114 to 263 (NGANPGADAE…DSQKECTDGN (150 aa)). The span at 125–150 (SPSTPATTTTTTTTNDAEASTSTSSE) shows a compositional bias: low complexity. Residues 151-167 (NRNHNNAETNPKGKGEV) show a composition bias toward basic and acidic residues. Composition is skewed to polar residues over residues 169–195 (KPNQ…NVPR) and 202–230 (KSPT…QSAP). N179 is a glycosylation site (N-linked (GlcNAc...) asparagine). N-linked (GlcNAc...) asparagine glycosylation occurs at N251. C259 and C267 are joined by a disulfide. 2 N-linked (GlcNAc...) asparagine glycosylation sites follow: N275 and N276. N276 is lipidated: GPI-anchor amidated asparagine. Positions 277–302 (SSNIASINKFVVLISATLVLSFAIFI) are cleaved as a propeptide — removed in mature form.

It is found in the cell membrane. May play a role in the merozoite attachment to the erythrocyte. This chain is Merozoite surface protein 2, found in Plasmodium falciparum (isolate tak 9).